Consider the following 145-residue polypeptide: Synaptojanin-2-binding protein (145 aa).

The Cytoplasmic portion of the chain corresponds to 1 to 117 (MNGRVDYLVT…VHRGEGEPSG (117 aa)). The PDZ domain occupies 13–100 (EINLTRGPSG…AVSLRVQHRL (88 aa)). Residues 118 to 138 (VPVAMVLLPVFALTMVAVWAF) traverse the membrane as a helical; Anchor for type IV membrane protein segment. The Mitochondrial intermembrane portion of the chain corresponds to 139–145 (VRYRKQL).

Binds (via the PDZ domain) to isoform 2A of SYNJ2 (via the unique motif in the C-terminus). Interacts (via C-terminus) with RALBP1. Interacts (via PDZ domain) with ACVR2A (via C-terminus) and ACVR2B (via C-terminus). Forms a ternary complex with ACVR2A and RALBP1. Interacts with MAPK12. Interacts with DLL1; enhances DLL1 protein stability, and promotes notch signaling in endothelial cells. Isoform 1 and isoform 2 are widely expressed, notably in brain, heart, lung, liver, kidney, skeletal muscle, ovary and testis. Isoform 3 is detected only in heart, spleen and testis.

Its subcellular location is the mitochondrion outer membrane. It is found in the cytoplasm. The protein resides in the perinuclear region. In terms of biological role, isoform 1 regulates endocytosis of activin type 2 receptor kinases through the Ral/RALBP1-dependent pathway and may be involved in suppression of activin-induced signal transduction. Isoform 2 and isoform 3 show a stimulatory affect on activin-induced signal transduction and enhance activin type 2 expression at the cell surface. The sequence is that of Synaptojanin-2-binding protein from Mus musculus (Mouse).